A 434-amino-acid polypeptide reads, in one-letter code: Methylenetetrahydrofolate--tRNA-(uracil-5-)-methyltransferase TrmFO (434 aa).

An FAD-binding site is contributed by 9 to 14 (GAGLAG).

This sequence belongs to the MnmG family. TrmFO subfamily. FAD serves as cofactor.

The protein localises to the cytoplasm. It catalyses the reaction uridine(54) in tRNA + (6R)-5,10-methylene-5,6,7,8-tetrahydrofolate + NADH + H(+) = 5-methyluridine(54) in tRNA + (6S)-5,6,7,8-tetrahydrofolate + NAD(+). The catalysed reaction is uridine(54) in tRNA + (6R)-5,10-methylene-5,6,7,8-tetrahydrofolate + NADPH + H(+) = 5-methyluridine(54) in tRNA + (6S)-5,6,7,8-tetrahydrofolate + NADP(+). In terms of biological role, catalyzes the folate-dependent formation of 5-methyl-uridine at position 54 (M-5-U54) in all tRNAs. This Listeria monocytogenes serotype 4b (strain F2365) protein is Methylenetetrahydrofolate--tRNA-(uracil-5-)-methyltransferase TrmFO.